Reading from the N-terminus, the 426-residue chain is Histone deacetylase 9 (426 aa).

Positions 6–318 (KISYFYDGDV…WTVETGILLD (313 aa)) are histone deacetylase. His-137 functions as the Proton donor/acceptor in the catalytic mechanism. Zn(2+) is bound by residues Asp-172, His-174, and Asp-261. Residues 383–426 (PDFYIPDFDEDEQNPDVRADQRSRDKQIQRDDEYFDGDNDNDAS) are disordered. Residues 397–414 (PDVRADQRSRDKQIQRDD) are compositionally biased toward basic and acidic residues. Acidic residues predominate over residues 415–426 (EYFDGDNDNDAS).

Belongs to the histone deacetylase family. HD type 1 subfamily. As to quaternary structure, interacts with AHL22. Binds to farnesylated ASG2 in the cytosol. Requires Zn(2+) as cofactor.

It localises to the nucleus. The protein resides in the cytoplasm. Its subcellular location is the cytosol. The catalysed reaction is N(6)-acetyl-L-lysyl-[histone] + H2O = L-lysyl-[histone] + acetate. Its function is as follows. Responsible for the deacetylation of lysine residues on the N-terminal part of the core histones (H2A, H2B, H3 and H4). Histone deacetylation gives a tag for epigenetic repression and plays an important role in transcriptional regulation, cell cycle progression and developmental events. Histone deacetylases act via the formation of large multiprotein complexes. In Arabidopsis thaliana (Mouse-ear cress), this protein is Histone deacetylase 9 (HDA9).